The chain runs to 592 residues: Arginine--tRNA ligase (592 aa).

Residues 134–144 (ANPTGPLHVGH) carry the 'HIGH' region motif.

This sequence belongs to the class-I aminoacyl-tRNA synthetase family. As to quaternary structure, monomer.

The protein localises to the cytoplasm. The enzyme catalyses tRNA(Arg) + L-arginine + ATP = L-arginyl-tRNA(Arg) + AMP + diphosphate. The chain is Arginine--tRNA ligase from Coxiella burnetii (strain RSA 493 / Nine Mile phase I).